Reading from the N-terminus, the 414-residue chain is Cytosolic-abundant heat soluble protein 89226 (414 aa).

2 stretches are compositionally biased toward basic and acidic residues: residues isoleucine 27–proline 45 and alanine 69–arginine 84. Positions isoleucine 27–threonine 155 are disordered. Composition is skewed to low complexity over residues serine 86–serine 101 and serine 120–aspartate 134. Positions alanine 142–threonine 155 are enriched in polar residues. CAHS motif stretches follow at residues tyrosine 305–glutamine 323 and glutamine 342–glutamate 360. Residues arginine 341–asparagine 376 adopt a coiled-coil conformation. Over residues threonine 388–alanine 405 the composition is skewed to polar residues. The disordered stretch occupies residues threonine 388–isoleucine 414.

Belongs to the Cytosolic-abundant heat soluble protein (CAHS) family.

It localises to the cytoplasm. Its function is as follows. CAHS proteins are cytosolic heat soluble proteins that seem to contribute to the anhydrobiosis in tardigrades, but their specific mechanisms are yet to be identified. It is possible that protection during anhydrobiosis might occur via the stabilization of vitrifying small molecules such as sugars, but not via the direct glass transition of CAHS proteins themselves. The polypeptide is Cytosolic-abundant heat soluble protein 89226 (Hypsibius exemplaris (Freshwater tardigrade)).